We begin with the raw amino-acid sequence, 367 residues long: 3-isopropylmalate dehydrogenase (367 aa).

Position 75–88 (75–88) interacts with NAD(+); the sequence is GPKWDGIERSKRPE. Residues Arg95, Arg105, Arg133, and Asp230 each contribute to the substrate site. Mg(2+)-binding residues include Asp230, Asp254, and Asp258. 288–300 is an NAD(+) binding site; that stretch reads GSAPDIAGQDIAN.

It belongs to the isocitrate and isopropylmalate dehydrogenases family. LeuB type 1 subfamily. As to quaternary structure, homodimer. Requires Mg(2+) as cofactor. It depends on Mn(2+) as a cofactor.

It localises to the cytoplasm. It catalyses the reaction (2R,3S)-3-isopropylmalate + NAD(+) = 4-methyl-2-oxopentanoate + CO2 + NADH. Its pathway is amino-acid biosynthesis; L-leucine biosynthesis; L-leucine from 3-methyl-2-oxobutanoate: step 3/4. In terms of biological role, catalyzes the oxidation of 3-carboxy-2-hydroxy-4-methylpentanoate (3-isopropylmalate) to 3-carboxy-4-methyl-2-oxopentanoate. The product decarboxylates to 4-methyl-2 oxopentanoate. This chain is 3-isopropylmalate dehydrogenase, found in Psychrobacter arcticus (strain DSM 17307 / VKM B-2377 / 273-4).